The chain runs to 193 residues: MSVIPMVVEQTARGERSYDIYSRLLKERVIFLGGEVEDRMANLIVAQLLFLESEDPEKDINIYINSPGGSVTAGMAIYDTMQFVKPDIRTLCVGQACSMGAFLLAGGTAGKRIALPSARVMIHQPLGGFRGQASDIQIHAQEILKIKQTLNERLAFHTGQTIERIERDTDRDNFMSAEEAKAYGLVDEVLASR.

Residue Ser98 is the Nucleophile of the active site. His123 is an active-site residue.

Belongs to the peptidase S14 family. In terms of assembly, fourteen ClpP subunits assemble into 2 heptameric rings which stack back to back to give a disk-like structure with a central cavity, resembling the structure of eukaryotic proteasomes.

It is found in the cytoplasm. The enzyme catalyses Hydrolysis of proteins to small peptides in the presence of ATP and magnesium. alpha-casein is the usual test substrate. In the absence of ATP, only oligopeptides shorter than five residues are hydrolyzed (such as succinyl-Leu-Tyr-|-NHMec, and Leu-Tyr-Leu-|-Tyr-Trp, in which cleavage of the -Tyr-|-Leu- and -Tyr-|-Trp bonds also occurs).. Its function is as follows. Cleaves peptides in various proteins in a process that requires ATP hydrolysis. Has a chymotrypsin-like activity. Plays a major role in the degradation of misfolded proteins. The chain is ATP-dependent Clp protease proteolytic subunit from Pasteurella multocida (strain Pm70).